Consider the following 135-residue polypeptide: UPF0299 membrane protein ECA2828 (135 aa).

Helical transmembrane passes span 5-25, 30-50, 63-83, and 93-113; these read FIVC…LLAG, ALLP…FTLL, GCYL…VGVM, and FGPI…VVGF.

The protein belongs to the UPF0299 family.

The protein localises to the cell inner membrane. The protein is UPF0299 membrane protein ECA2828 of Pectobacterium atrosepticum (strain SCRI 1043 / ATCC BAA-672) (Erwinia carotovora subsp. atroseptica).